Here is a 310-residue protein sequence, read N- to C-terminus: MAAIIYLAIAAVASILLFVAVKLLSTDTKTEIRTDDDVGELIGRENPVPQRPRARARRGLRNKTNRSKTQRQHDNDYDDYDDEYQDDGFLEEPVYDRKMGTKKLRKLEEKAEKKAMREQMEAEREDKINRQELREQNRRKEEERKAKEREEKEEAERKLKEEQEKREYEEYLRLKESFSVENEGSGEAEIAQESQSLLQEFIDYIKNNKVVLLEDVAAHFKLRTEDVINRIQTLQSMDRLTGVVDDRGKYIYISVEELNAIAKFIKQRGRVSISELAESSNSLINLQSDSKASHTIESVNDSPAEISVNA.

A helical membrane pass occupies residues 1–21; the sequence is MAAIIYLAIAAVASILLFVAV. At 22–310 the chain is on the cytoplasmic side; the sequence is KLLSTDTKTE…DSPAEISVNA (289 aa). Disordered regions lie at residues 38 to 85 and 110 to 162; these read VGEL…DEYQ and KAEK…LKEE. Positions 52 to 70 are enriched in basic residues; it reads PRARARRGLRNKTNRSKTQ. A compositionally biased stretch (acidic residues) spans 76–85; it reads DYDDYDDEYQ.

It belongs to the DDRGK1 family.

The protein localises to the endoplasmic reticulum membrane. Substrate adapter for ufmylation, the covalent attachment of the ubiquitin-like modifier UFM1 to substrate proteins. The chain is DDRGK domain-containing protein 1 from Trichoplax adhaerens (Trichoplax reptans).